The sequence spans 143 residues: MELNGIKPAAGAKHAKRRVGRGIGSGIGKTAGRGHKGQKSRAGGFHKVGFEGGQMPLQRRLPKRGFKSHLLKFNAEVTLTALEQLGLAEVDILALKQAGLVGQLAKVVKIVKTGELTKAVKLTGVGATAGAKAAIEAAGGSVA.

Residues 1-51 (MELNGIKPAAGAKHAKRRVGRGIGSGIGKTAGRGHKGQKSRAGGFHKVGFE) are disordered. Gly residues predominate over residues 21–31 (RGIGSGIGKTA).

Belongs to the universal ribosomal protein uL15 family. As to quaternary structure, part of the 50S ribosomal subunit.

In terms of biological role, binds to the 23S rRNA. The polypeptide is Large ribosomal subunit protein uL15 (Variovorax paradoxus (strain S110)).